A 215-amino-acid chain; its full sequence is Cytochrome b6 (215 aa).

The chain crosses the membrane as a helical span at residues 32–52 (IFYCLGGITLTCFLIQFATGF). Cysteine 35 is a binding site for heme c. Histidine 86 and histidine 100 together coordinate heme b. 3 helical membrane passes run 90–110 (ASMM…TGGF), 116–136 (LTWV…VTGY), and 186–206 (LHTF…FLMI). The heme b site is built by histidine 187 and histidine 202.

Belongs to the cytochrome b family. PetB subfamily. In terms of assembly, the 4 large subunits of the cytochrome b6-f complex are cytochrome b6, subunit IV (17 kDa polypeptide, PetD), cytochrome f and the Rieske protein, while the 4 small subunits are PetG, PetL, PetM and PetN. The complex functions as a dimer. Requires heme b as cofactor. The cofactor is heme c.

It localises to the cellular thylakoid membrane. Functionally, component of the cytochrome b6-f complex, which mediates electron transfer between photosystem II (PSII) and photosystem I (PSI), cyclic electron flow around PSI, and state transitions. This Synechococcus elongatus protein is Cytochrome b6.